A 334-amino-acid polypeptide reads, in one-letter code: Ornithine carbamoyltransferase (334 aa).

Carbamoyl phosphate-binding positions include 57–60 (STRT), Gln-84, Arg-108, and 135–138 (HPTQ). L-ornithine contacts are provided by residues Asn-169, Asp-233, and 237 to 238 (SM). Carbamoyl phosphate-binding positions include 275 to 276 (CL) and Arg-320.

This sequence belongs to the aspartate/ornithine carbamoyltransferase superfamily. OTCase family.

It localises to the cytoplasm. It catalyses the reaction carbamoyl phosphate + L-ornithine = L-citrulline + phosphate + H(+). It participates in amino-acid biosynthesis; L-arginine biosynthesis; L-arginine from L-ornithine and carbamoyl phosphate: step 1/3. In terms of biological role, reversibly catalyzes the transfer of the carbamoyl group from carbamoyl phosphate (CP) to the N(epsilon) atom of ornithine (ORN) to produce L-citrulline. In Vibrio parahaemolyticus serotype O3:K6 (strain RIMD 2210633), this protein is Ornithine carbamoyltransferase.